Here is a 78-residue protein sequence, read N- to C-terminus: UPF0154 protein lp_2061 (78 aa).

The chain crosses the membrane as a helical span at residues 5-27; that stretch reads TGIWILIVVIGVLVGLTGGFFGA.

This sequence belongs to the UPF0154 family.

Its subcellular location is the membrane. The sequence is that of UPF0154 protein lp_2061 from Lactiplantibacillus plantarum (strain ATCC BAA-793 / NCIMB 8826 / WCFS1) (Lactobacillus plantarum).